The sequence spans 319 residues: Malate dehydrogenase (319 aa).

Residues 10–15 and aspartate 34 contribute to the NAD(+) site; that span reads GAGQIG. The substrate site is built by arginine 85 and arginine 91. NAD(+) contacts are provided by residues asparagine 98 and 121–123; that span reads ITN. Residues asparagine 123 and arginine 154 each contribute to the substrate site. Histidine 178 functions as the Proton acceptor in the catalytic mechanism.

This sequence belongs to the LDH/MDH superfamily. MDH type 3 family.

It catalyses the reaction (S)-malate + NAD(+) = oxaloacetate + NADH + H(+). Catalyzes the reversible oxidation of malate to oxaloacetate. The protein is Malate dehydrogenase of Rhodospirillum centenum (strain ATCC 51521 / SW).